The sequence spans 273 residues: Putative phosphoenolpyruvate synthase regulatory protein (273 aa).

153–160 is a binding site for ADP; sequence GVSRSGKT.

The protein belongs to the pyruvate, phosphate/water dikinase regulatory protein family. PSRP subfamily.

It catalyses the reaction [pyruvate, water dikinase] + ADP = [pyruvate, water dikinase]-phosphate + AMP + H(+). The enzyme catalyses [pyruvate, water dikinase]-phosphate + phosphate + H(+) = [pyruvate, water dikinase] + diphosphate. In terms of biological role, bifunctional serine/threonine kinase and phosphorylase involved in the regulation of the phosphoenolpyruvate synthase (PEPS) by catalyzing its phosphorylation/dephosphorylation. This Polaromonas naphthalenivorans (strain CJ2) protein is Putative phosphoenolpyruvate synthase regulatory protein.